A 523-amino-acid polypeptide reads, in one-letter code: Amino acid transporter protein 6 (523 aa).

Residues 1 to 19 are Cytoplasmic-facing; it reads MLNVFGVSASMPDDSRSQK. The helical transmembrane segment at 20-40 threads the bilayer; it reads MGLLGAISYIVGNIVGSGIFI. Topologically, residues 41–51 are extracellular; it reads TPTSIIENVNS. Residues 52 to 72 form a helical membrane-spanning segment; the sequence is VGLSLAIWILAAFISMLGSFC. Residues 73–86 are Cytoplasmic-facing; that stretch reads YVELGTSIRLSGGD. The chain crosses the membrane as a helical span at residues 87 to 107; sequence FAYLCFMKWYPVAFAFMCIGC. At 108–145 the chain is on the extracellular side; that stretch reads TINYPATLAVQAQTFAEYVFRGAGVELDETSEFWAKKL. Residues 146–166 traverse the membrane as a helical segment; the sequence is LGFSLIILLMFMNFFSLKTFV. Residues 167-173 are Cytoplasmic-facing; sequence QRFSILA. Residues 174-194 traverse the membrane as a helical segment; the sequence is SLAKIAATLLIIITGFYYLIF. The Extracellular portion of the chain corresponds to 195–214; that stretch reads KHWKQNLEEPFKGSNWNPGP. A helical membrane pass occupies residues 215–235; it reads FVNALFAGLFSYDGWDILNFG. Over 236–249 the chain is Cytoplasmic; it reads AEEIENPKRTMPLS. A helical transmembrane segment spans residues 250–270; the sequence is IIIGMTCIGVIYVAVNVAYSI. The Extracellular portion of the chain corresponds to 271-290; the sequence is VLSPTEMIASNAVAIDFANK. Asn289 is a glycosylation site (N-linked (GlcNAc...) asparagine). A helical membrane pass occupies residues 291 to 311; that stretch reads TLGAAAFVVPVMVAILLIGSL. At 312-348 the chain is on the cytoplasmic side; that stretch reads NSTMFSASRYLQAVSRQGHIPSAISGIAPNCDSPRVA. The chain crosses the membrane as a helical span at residues 349-369; it reads LLVHILIAIAVSFLGDPDKLI. Topologically, residues 370 to 404 are extracellular; sequence NYVAFAQWSQRAFTMSALLYLRIRGRPRHPDRIQL. The chain crosses the membrane as a helical span at residues 405 to 425; the sequence is PIIMPILFFLVCTSMVVISII. Over 426–429 the chain is Cytoplasmic; it reads DDFK. The chain crosses the membrane as a helical span at residues 430 to 450; it reads SSAVGLGILLGGLIIFIIFVW. Residues 451 to 523 lie on the Extracellular side of the membrane; the sequence is DRALPSSHTF…GNGQFKCTRM (73 aa). N-linked (GlcNAc...) asparagine glycosylation is present at Asn462. The PDZ-binding motif signature appears at 521-523; sequence TRM.

It belongs to the amino acid-polyamine-organocation (APC) superfamily. In terms of assembly, interacts (via PDZ-binding motif) with nfrl-1 (via PDZ 2 domain); the interaction with nrfl-1 is required to sequester aat-6 to the apical cell membrane of intestinal cells. Expressed at the apical cell membrane of intestinal cells.

It is found in the apical cell membrane. In terms of biological role, amino acid transporter that mediates the uptake of the L-enantiomers of various amino acids, including L-glutamate. May play a role in promoting fertility. In Caenorhabditis elegans, this protein is Amino acid transporter protein 6.